Consider the following 65-residue polypeptide: Large ribosomal subunit protein bL33c (65 aa).

Belongs to the bacterial ribosomal protein bL33 family.

Its subcellular location is the plastid. The protein localises to the chloroplast. This Pyropia yezoensis (Susabi-nori) protein is Large ribosomal subunit protein bL33c.